We begin with the raw amino-acid sequence, 182 residues long: MLRVATAECFTHGFVGREIHASASGYTGELGSEILGTELEGKVSVVAACFIPTVSGLRSLLGIDPPEPDEVSKSGAKAYREETDRKVAVMMARAVRERTGADVGIGTTAGIGRGAICLDDGEITLLGRTDVHANLLKPDERIRKRQLQGIKRSLVMFRAYFRCELDELLEEEWVEEVTRDLP.

This sequence belongs to the UPF0254 family.

The sequence is that of UPF0254 protein MK0012 from Methanopyrus kandleri (strain AV19 / DSM 6324 / JCM 9639 / NBRC 100938).